The chain runs to 152 residues: Proline-rich acidic protein 1 (152 aa).

The N-terminal stretch at 1-20 (MKRFLLATCLVAVLLWEAGA) is a signal peptide.

Interacts with MTTP. Interacts with MAD1L1. Highly expressed in the small intestine where it shows a proximal-distal graded expression.

The protein localises to the secreted. Its subcellular location is the endoplasmic reticulum. Lipid-binding protein which promotes lipid absorption by facilitating MTTP-mediated lipid transfer (mainly triglycerides and phospholipids) and MTTP-mediated apoB lipoprotein assembly and secretion. Protects the gastrointestinal epithelium from irradiation-induced apoptosis. May play an important role in maintaining normal growth homeostasis in epithelial cells. Involved in p53/TP53-dependent cell survival after DNA damage. The polypeptide is Proline-rich acidic protein 1 (Prap1) (Rattus norvegicus (Rat)).